We begin with the raw amino-acid sequence, 436 residues long: Bystin (436 aa).

Phosphothreonine is present on Thr145. Residues Ser148 and Ser152 each carry the phosphoserine modification.

Belongs to the bystin family.

It localises to the nucleus. It is found in the nucleolus. Required for processing of 20S pre-rRNA precursor and biogenesis of 40S ribosomal subunits. This is Bystin (bys) from Drosophila melanogaster (Fruit fly).